We begin with the raw amino-acid sequence, 335 residues long: MTENVVCTGAVNAVKEVWEKRIKKLNEDLKREKEFQHKLVRIWEERVSLTKLREKVTREDGRVILKIEKEEWKTLPSSLLKLNQLQEWQLHRTGLLKIPEFIGRFQNLIVLDLSRNTISEIPPGIGLLTRLQELILSYNKIKTVPKELSNCASLEKLELAVNRDICDLPQELSNLLKLTHLDLSMNDFTTIPLAVLNMPALEWLDMGSNKLEQLPDTIERMQNLHTLWLQRNEITCLPQTISNMKNLGTLVLSNNKLQDIPVCMEEMANLRFVNFRDNPLKLKVSLPPSEGTDEEEERELFGLQFMHTYIQESRRRADHQVNGSTTLPISINTDG.

A coiled-coil region spans residues 10–47 (AVNAVKEVWEKRIKKLNEDLKREKEFQHKLVRIWEERV). 9 LRR repeats span residues 84–105 (QLQE…IGRF), 107–128 (NLIV…IGLL), 130–151 (RLQE…LSNC), 153–176 (SLEK…SNLL), 177–197 (KLTH…AVLN), 200–221 (ALEW…IERM), 223–244 (NLHT…ISNM), 246–267 (NLGT…MEEM), and 269–290 (NLRF…PPSE).

In terms of assembly, interacts with MYH7 (via C-terminus). As to expression, highly expressed in skeletal muscle and heart. Not detected in other tissues tested.

The protein localises to the cytoplasm. Its subcellular location is the myofibril. The protein resides in the sarcomere. It localises to the m line. Component of the sarcomeric M-band which plays a role in myocyte response to biomechanical stress. May regulate expression of other M-band proteins via an SRF-dependent pathway. Important for normal contractile function in heart. The protein is Leucine-rich repeat-containing protein 39 (LRRC39) of Homo sapiens (Human).